The primary structure comprises 285 residues: Release factor glutamine methyltransferase (285 aa).

Residues 124-128, Asp-147, and Asn-190 contribute to the S-adenosyl-L-methionine site; that span reads GTGSG. 190–193 is a binding site for substrate; sequence NPPY.

Belongs to the protein N5-glutamine methyltransferase family. PrmC subfamily.

The catalysed reaction is L-glutaminyl-[peptide chain release factor] + S-adenosyl-L-methionine = N(5)-methyl-L-glutaminyl-[peptide chain release factor] + S-adenosyl-L-homocysteine + H(+). Methylates the class 1 translation termination release factors RF1/PrfA and RF2/PrfB on the glutamine residue of the universally conserved GGQ motif. This Flavobacterium psychrophilum (strain ATCC 49511 / DSM 21280 / CIP 103535 / JIP02/86) protein is Release factor glutamine methyltransferase.